Consider the following 94-residue polypeptide: MSIKENSYFAGGVKSLGFNQHGQDVSVGVMLPGEYTFGTQAPERMTVVKGALVVKRVGEADWTTYSSGESFDVEGNSSFELQVKDATAYLCEYL.

It belongs to the nucleoside phosphorylase PpnP family.

It carries out the reaction a purine D-ribonucleoside + phosphate = a purine nucleobase + alpha-D-ribose 1-phosphate. It catalyses the reaction adenosine + phosphate = alpha-D-ribose 1-phosphate + adenine. The enzyme catalyses cytidine + phosphate = cytosine + alpha-D-ribose 1-phosphate. The catalysed reaction is guanosine + phosphate = alpha-D-ribose 1-phosphate + guanine. It carries out the reaction inosine + phosphate = alpha-D-ribose 1-phosphate + hypoxanthine. It catalyses the reaction thymidine + phosphate = 2-deoxy-alpha-D-ribose 1-phosphate + thymine. The enzyme catalyses uridine + phosphate = alpha-D-ribose 1-phosphate + uracil. The catalysed reaction is xanthosine + phosphate = alpha-D-ribose 1-phosphate + xanthine. Its function is as follows. Catalyzes the phosphorolysis of diverse nucleosides, yielding D-ribose 1-phosphate and the respective free bases. Can use uridine, adenosine, guanosine, cytidine, thymidine, inosine and xanthosine as substrates. Also catalyzes the reverse reactions. This is Pyrimidine/purine nucleoside phosphorylase from Vibrio parahaemolyticus serotype O3:K6 (strain RIMD 2210633).